The chain runs to 84 residues: Small ribosomal subunit protein bS18A (84 aa).

The protein belongs to the bacterial ribosomal protein bS18 family. Part of the 30S ribosomal subunit. Forms a tight heterodimer with protein bS6.

Its function is as follows. Binds as a heterodimer with protein bS6 to the central domain of the 16S rRNA, where it helps stabilize the platform of the 30S subunit. This chain is Small ribosomal subunit protein bS18A, found in Frankia alni (strain DSM 45986 / CECT 9034 / ACN14a).